The following is a 1520-amino-acid chain: Putative lipoprotein AcfD homolog (1520 aa).

The first 23 residues, 1–23, serve as a signal peptide directing secretion; that stretch reads MNKKFKYKKSLLAAILSATLLAG. 2 disordered regions span residues 22–107 and 226–247; these read AGCD…GATC and NAATDKAPSTHTSPVVPVTTPG. The N-palmitoyl cysteine moiety is linked to residue C24. C24 carries S-diacylglycerol cysteine lipidation. The segment covering 31-42 has biased composition (low complexity); that stretch reads SSSDTPPVDSGT. The segment covering 51-77 has biased composition (pro residues); it reads DPTPNPEPTPEPTPDPEPTPEPIPDPE. Residues 97–107 show a composition bias toward polar residues; it reads GGSQRVTGATC. Over residues 234 to 247 the composition is skewed to low complexity; the sequence is STHTSPVVPVTTPG. The region spanning 1081–1381 is the Peptidase M60 domain; sequence GNMQSTGLWA…MYAQLKEWAE (301 aa). The disordered stretch occupies residues 1498–1520; it reads DLPKPEQGPETINQVTEHKMSAE.

It to V.cholerae AcfD (VC_0845).

The protein localises to the cell inner membrane. Functionally, involved in a type II secretion system (T2SS, formerly general secretion pathway, GSP) for the export of folded proteins across the outer membrane. This Escherichia coli (strain K12) protein is Putative lipoprotein AcfD homolog (yghJ).